Here is a 328-residue protein sequence, read N- to C-terminus: Carbonic anhydrase-related protein 10 (328 aa).

Positions glycine 31–isoleucine 301 constitute an Alpha-carbonic anhydrase domain.

Belongs to the alpha-carbonic anhydrase family.

In terms of biological role, does not have a catalytic activity. The sequence is that of Carbonic anhydrase-related protein 10 (CA10) from Bos taurus (Bovine).